The chain runs to 107 residues: Large ribosomal subunit protein uL24 (107 aa).

Belongs to the universal ribosomal protein uL24 family. As to quaternary structure, part of the 50S ribosomal subunit.

Functionally, one of two assembly initiator proteins, it binds directly to the 5'-end of the 23S rRNA, where it nucleates assembly of the 50S subunit. In terms of biological role, one of the proteins that surrounds the polypeptide exit tunnel on the outside of the subunit. This is Large ribosomal subunit protein uL24 from Malacoplasma penetrans (strain HF-2) (Mycoplasma penetrans).